The following is a 245-amino-acid chain: 1-(5-phosphoribosyl)-5-[(5-phosphoribosylamino)methylideneamino] imidazole-4-carboxamide isomerase (245 aa).

Asp8 (proton acceptor) is an active-site residue. Asp130 serves as the catalytic Proton donor.

This sequence belongs to the HisA/HisF family.

Its subcellular location is the cytoplasm. The enzyme catalyses 1-(5-phospho-beta-D-ribosyl)-5-[(5-phospho-beta-D-ribosylamino)methylideneamino]imidazole-4-carboxamide = 5-[(5-phospho-1-deoxy-D-ribulos-1-ylimino)methylamino]-1-(5-phospho-beta-D-ribosyl)imidazole-4-carboxamide. Its pathway is amino-acid biosynthesis; L-histidine biosynthesis; L-histidine from 5-phospho-alpha-D-ribose 1-diphosphate: step 4/9. This is 1-(5-phosphoribosyl)-5-[(5-phosphoribosylamino)methylideneamino] imidazole-4-carboxamide isomerase from Pseudomonas syringae pv. tomato (strain ATCC BAA-871 / DC3000).